A 646-amino-acid chain; its full sequence is Protein real-time (646 aa).

In terms of domain architecture, PRELI/MSF1 spans 2 to 175 (VQKYESPVRI…FINELKKEGI (174 aa)). Residues 294-471 (TPVVVEKYFP…FLGGSCITMI (178 aa)) form the CRAL-TRIO domain. One can recognise a GOLD domain in the interval 499–646 (HHGLYKSVDL…GFSSNSLQSR (148 aa)).

It localises to the mitochondrion. This is Protein real-time from Aedes aegypti (Yellowfever mosquito).